Reading from the N-terminus, the 176-residue chain is RNA pyrophosphohydrolase (176 aa).

Residues 6 to 149 (GYRPNVGIVI…KRDVYRRVMK (144 aa)) form the Nudix hydrolase domain. The short motif at 38–59 (GGINPGESAEQAMYRELFEEVG) is the Nudix box element.

Belongs to the Nudix hydrolase family. RppH subfamily. It depends on a divalent metal cation as a cofactor.

Functionally, accelerates the degradation of transcripts by removing pyrophosphate from the 5'-end of triphosphorylated RNA, leading to a more labile monophosphorylated state that can stimulate subsequent ribonuclease cleavage. This chain is RNA pyrophosphohydrolase, found in Shigella dysenteriae serotype 1 (strain Sd197).